We begin with the raw amino-acid sequence, 4467 residues long: Protocadherin-like protein (4467 aa).

The N-terminal stretch at 1 to 22 is a signal peptide; it reads MRGINAIVGFLLCFCLLHRINT. Cadherin domains lie at 23 to 128, 129 to 238, 239 to 350, 351 to 455, 459 to 566, 567 to 664, 665 to 764, 765 to 884, 885 to 994, 1092 to 1197, 1290 to 1395, 1396 to 1499, 1495 to 1597, 1601 to 1701, 1793 to 1891, 1892 to 1992, 1993 to 2100, 2101 to 2202, 2203 to 2312, 2313 to 2423, 2425 to 2529, 2530 to 2639, 2640 to 2746, 2747 to 2849, 2850 to 2954, 2955 to 3062, 3063 to 3170, and 3173 to 3288; these read AVQF…SPTF, PQHL…SPVF, EKKS…VPVF, QEES…TPVF, NPQQ…NPDF, SKVV…PPTF, KNAP…PPTF, SRSS…SPEF, SQTS…PPLF, EAQP…QPRF, SRTV…SPKF, SADS…PPKF, GPPK…EPQF, SNGF…QPVR, TMID…KPQF, SESA…YPKF, EPNL…KPQF, LESD…RPVF, TDCP…FPFF, LTRT…PPAF, PSAV…TPTF, KLEE…PPIF, PKPS…IPKF, DNLI…SPYF, PNPP…APVF, NPRE…PPVF, VPAE…GPWF, and RYYE…EPFD. Residues 23-4258 are Extracellular-facing; it reads AVQFKQEILE…RPSSRWANPA (4236 aa). The EGF-like 1 domain occupies 3551-3589; it reads PDINCTTGTPCLHGGTCHNAVPKGIICECGRDYLGPECQ. Cystine bridges form between Cys-3555-Cys-3567, Cys-3561-Cys-3577, Cys-3579-Cys-3588, Cys-3762-Cys-3788, Cys-3794-Cys-3803, Cys-3797-Cys-3812, and Cys-3814-Cys-3823. One can recognise a Laminin G-like 1 domain in the interval 3590-3788; the sequence is STTRTFRGNS…LKEVNTELGC (199 aa). The EGF-like 2 domain maps to 3790-3824; that stretch reads LNNQCPNCNGRGYCEPFWNYAICVCDLGFGGANCD. Residues 3842–4096 enclose the Laminin G-like 2 domain; sequence VKQVKRKRRE…KVIISSSGGS (255 aa). The disordered stretch occupies residues 4089–4118; that stretch reads IISSSGGSVSGGSGGASGGSGGASGSGGSV. The span at 4096–4118 shows a compositional bias: gly residues; it reads SVSGGSGGASGGSGGASGSGGSV. Positions 4206–4238 constitute an EGF-like 3 domain; that stretch reads PCGSNFCRHGGTCVSADPPYCLCPVGWSGPVCE. 3 disulfide bridges follow: Cys-4207/Cys-4218, Cys-4212/Cys-4226, and Cys-4228/Cys-4237. Residues 4259 to 4279 form a helical membrane-spanning segment; the sequence is VIACILVILLAILVIIGAVLL. Topologically, residues 4280 to 4467 are cytoplasmic; the sequence is KRRPQPAVVA…NLNRIFNEDE (188 aa). Residues 4424–4445 form a disordered region; the sequence is DVDDLSELGDSDEEPDEEEEQE.

Component of the acid-insoluble organic matrix of the aragonitic skeleton (at protein level).

It is found in the membrane. The chain is Protocadherin-like protein from Acropora millepora (Staghorn coral).